The primary structure comprises 285 residues: Shikimate dehydrogenase (NADP(+)) (285 aa).

Shikimate is bound by residues 22 to 24 (SRS) and Thr-71. Lys-75 (proton acceptor) is an active-site residue. Asn-96 and Asp-111 together coordinate shikimate. Residues 136–140 (GAGGA), 160–165 (NRTVGR), and Ile-225 contribute to the NADP(+) site. Tyr-227 contributes to the shikimate binding site. Residue Gly-248 coordinates NADP(+).

This sequence belongs to the shikimate dehydrogenase family. In terms of assembly, homodimer.

It carries out the reaction shikimate + NADP(+) = 3-dehydroshikimate + NADPH + H(+). It functions in the pathway metabolic intermediate biosynthesis; chorismate biosynthesis; chorismate from D-erythrose 4-phosphate and phosphoenolpyruvate: step 4/7. Its function is as follows. Involved in the biosynthesis of the chorismate, which leads to the biosynthesis of aromatic amino acids. Catalyzes the reversible NADPH linked reduction of 3-dehydroshikimate (DHSA) to yield shikimate (SA). In Rhizobium etli (strain CIAT 652), this protein is Shikimate dehydrogenase (NADP(+)).